The chain runs to 621 residues: uncharacterized protein (621 aa).

The protein localises to the plastid. Its subcellular location is the chloroplast. This is an uncharacterized protein from Porphyra purpurea (Red seaweed).